A 298-amino-acid polypeptide reads, in one-letter code: Ethanolamine ammonia-lyase small subunit (298 aa).

The segment at 15–43 (ASMGQDVPQPVAPSTQEGAKPQRAAPTAT) is disordered. V210, E231, and C261 together coordinate adenosylcob(III)alamin.

It belongs to the EutC family. The basic unit is a heterodimer which dimerizes to form tetramers. The heterotetramers trimerize; 6 large subunits form a core ring with 6 small subunits projecting outwards. Requires adenosylcob(III)alamin as cofactor.

It is found in the bacterial microcompartment. It catalyses the reaction ethanolamine = acetaldehyde + NH4(+). It functions in the pathway amine and polyamine degradation; ethanolamine degradation. Catalyzes the deamination of various vicinal amino-alcohols to oxo compounds. Allows this organism to utilize ethanolamine as the sole source of nitrogen and carbon in the presence of external vitamin B12. This Salmonella arizonae (strain ATCC BAA-731 / CDC346-86 / RSK2980) protein is Ethanolamine ammonia-lyase small subunit.